A 262-amino-acid chain; its full sequence is Tryptophan synthase alpha chain (262 aa).

Residues Glu-48 and Asp-59 each act as proton acceptor in the active site.

Belongs to the TrpA family. In terms of assembly, tetramer of two alpha and two beta chains.

The catalysed reaction is (1S,2R)-1-C-(indol-3-yl)glycerol 3-phosphate + L-serine = D-glyceraldehyde 3-phosphate + L-tryptophan + H2O. The protein operates within amino-acid biosynthesis; L-tryptophan biosynthesis; L-tryptophan from chorismate: step 5/5. Functionally, the alpha subunit is responsible for the aldol cleavage of indoleglycerol phosphate to indole and glyceraldehyde 3-phosphate. The chain is Tryptophan synthase alpha chain from Helicobacter pylori (strain Shi470).